A 201-amino-acid polypeptide reads, in one-letter code: Peptidyl-tRNA hydrolase (201 aa).

Tyr-15 serves as a coordination point for tRNA. His-20 acts as the Proton acceptor in catalysis. Residues Tyr-66, Asn-68, and Asn-114 each contribute to the tRNA site.

This sequence belongs to the PTH family. As to quaternary structure, monomer.

It is found in the cytoplasm. The enzyme catalyses an N-acyl-L-alpha-aminoacyl-tRNA + H2O = an N-acyl-L-amino acid + a tRNA + H(+). Hydrolyzes ribosome-free peptidyl-tRNAs (with 1 or more amino acids incorporated), which drop off the ribosome during protein synthesis, or as a result of ribosome stalling. In terms of biological role, catalyzes the release of premature peptidyl moieties from peptidyl-tRNA molecules trapped in stalled 50S ribosomal subunits, and thus maintains levels of free tRNAs and 50S ribosomes. The sequence is that of Peptidyl-tRNA hydrolase from Burkholderia pseudomallei (strain K96243).